Reading from the N-terminus, the 706-residue chain is Serotransferrin (706 aa).

Residues 1-19 (MRLAIRALLACAVLGLCLA) form the signal peptide. 2 Transferrin-like domains span residues 23–349 (VRWC…NLRE) and 363–691 (VKWC…NLRQ). 2 cysteine pairs are disulfide-bonded: cysteine 26/cysteine 64 and cysteine 36/cysteine 55. At arginine 40 the chain carries Dimethylated arginine. Aspartate 79 and tyrosine 111 together coordinate Fe(3+). 5 disulfide bridges follow: cysteine 134/cysteine 215, cysteine 174/cysteine 190, cysteine 177/cysteine 198, cysteine 187/cysteine 200, and cysteine 248/cysteine 262. Residues threonine 136, arginine 140, alanine 142, and glycine 143 each contribute to the hydrogencarbonate site. Tyrosine 209 lines the Fe(3+) pocket. Position 270 (histidine 270) interacts with Fe(3+). 11 disulfides stabilise this stretch: cysteine 360/cysteine 623, cysteine 366/cysteine 398, cysteine 376/cysteine 389, cysteine 423/cysteine 701, cysteine 441/cysteine 664, cysteine 474/cysteine 550, cysteine 498/cysteine 692, cysteine 508/cysteine 522, cysteine 519/cysteine 533, cysteine 590/cysteine 604, and cysteine 642/cysteine 647. A Phosphoserine modification is found at serine 391. Fe(3+) contacts are provided by aspartate 413 and tyrosine 449. Residues threonine 476, arginine 480, alanine 482, and glycine 483 each coordinate hydrogencarbonate. Residue asparagine 515 is glycosylated (N-linked (GlcNAc...) asparagine). Tyrosine 544 contacts Fe(3+). Histidine 612 contacts Fe(3+). Position 693 is a phosphoserine (serine 693).

This sequence belongs to the transferrin family. In terms of assembly, monomer. Part of a complex composed of SLC40A1/ferroportin, TF/transferrin and HEPH/hephaestin that transfers iron from cells to transferrin. As to expression, expressed by the liver and secreted in plasma.

Its subcellular location is the secreted. Its function is as follows. Transferrins are iron binding transport proteins which can bind two Fe(3+) ions in association with the binding of an anion, usually bicarbonate. It is responsible for the transport of iron from sites of absorption and heme degradation to those of storage and utilization. Serum transferrin may also have a further role in stimulating cell proliferation. This is Serotransferrin (TF) from Equus caballus (Horse).